The sequence spans 157 residues: S-ribosylhomocysteine lyase (157 aa).

Residues His-54, His-58, and Cys-126 each contribute to the Fe cation site.

It belongs to the LuxS family. Homodimer. The cofactor is Fe cation.

The enzyme catalyses S-(5-deoxy-D-ribos-5-yl)-L-homocysteine = (S)-4,5-dihydroxypentane-2,3-dione + L-homocysteine. Involved in the synthesis of autoinducer 2 (AI-2) which is secreted by bacteria and is used to communicate both the cell density and the metabolic potential of the environment. The regulation of gene expression in response to changes in cell density is called quorum sensing. Catalyzes the transformation of S-ribosylhomocysteine (RHC) to homocysteine (HC) and 4,5-dihydroxy-2,3-pentadione (DPD). The chain is S-ribosylhomocysteine lyase from Bacillus cereus (strain 03BB102).